The primary structure comprises 876 residues: Alanine--tRNA ligase (876 aa).

Zn(2+)-binding residues include His568, His572, Cys669, and His673.

This sequence belongs to the class-II aminoacyl-tRNA synthetase family. Zn(2+) is required as a cofactor.

The protein localises to the cytoplasm. The catalysed reaction is tRNA(Ala) + L-alanine + ATP = L-alanyl-tRNA(Ala) + AMP + diphosphate. Functionally, catalyzes the attachment of alanine to tRNA(Ala) in a two-step reaction: alanine is first activated by ATP to form Ala-AMP and then transferred to the acceptor end of tRNA(Ala). Also edits incorrectly charged Ser-tRNA(Ala) and Gly-tRNA(Ala) via its editing domain. The protein is Alanine--tRNA ligase of Sulfurihydrogenibium sp. (strain YO3AOP1).